Here is a 452-residue protein sequence, read N- to C-terminus: Pup--protein ligase (452 aa).

Residue Glu9 coordinates Mg(2+). Arg53 contributes to the ATP binding site. Tyr55 provides a ligand contact to Mg(2+). The Proton acceptor role is filled by Asp57. Mg(2+) is bound at residue Glu63. ATP contacts are provided by Thr66 and Trp419.

Belongs to the Pup ligase/Pup deamidase family. Pup-conjugating enzyme subfamily.

The catalysed reaction is ATP + [prokaryotic ubiquitin-like protein]-L-glutamate + [protein]-L-lysine = ADP + phosphate + N(6)-([prokaryotic ubiquitin-like protein]-gamma-L-glutamyl)-[protein]-L-lysine.. It functions in the pathway protein degradation; proteasomal Pup-dependent pathway. The protein operates within protein modification; protein pupylation. Its function is as follows. Catalyzes the covalent attachment of the prokaryotic ubiquitin-like protein modifier Pup to the proteasomal substrate proteins, thereby targeting them for proteasomal degradation. This tagging system is termed pupylation. The ligation reaction involves the side-chain carboxylate of the C-terminal glutamate of Pup and the side-chain amino group of a substrate lysine. In Actinosynnema mirum (strain ATCC 29888 / DSM 43827 / JCM 3225 / NBRC 14064 / NCIMB 13271 / NRRL B-12336 / IMRU 3971 / 101), this protein is Pup--protein ligase.